The primary structure comprises 421 residues: ATP-dependent RNA helicase RhlB (421 aa).

The short motif at 9–37 (QKFSDFALHPKVVEALEKKGFHNCTPIQA) is the Q motif element. One can recognise a Helicase ATP-binding domain in the interval 40–219 (LPLTLAGRDV…FEQMNNAEYI (180 aa)). Residue 53–60 (AQTGTGKT) participates in ATP binding. The DEAD box motif lies at 165 to 168 (DEAD). Positions 245-390 (RLLQTLIEEE…VSKYNPDALM (146 aa)) constitute a Helicase C-terminal domain. Residues 392–421 (DLPKPLRLTRPRTGNGPRRTGTPRNRRRSG) form a disordered region. Residues 402–414 (PRTGNGPRRTGTP) show a composition bias toward low complexity.

Belongs to the DEAD box helicase family. RhlB subfamily. In terms of assembly, component of the RNA degradosome, which is a multiprotein complex involved in RNA processing and mRNA degradation.

The protein resides in the cytoplasm. It catalyses the reaction ATP + H2O = ADP + phosphate + H(+). Functionally, DEAD-box RNA helicase involved in RNA degradation. Has RNA-dependent ATPase activity and unwinds double-stranded RNA. In Escherichia coli O17:K52:H18 (strain UMN026 / ExPEC), this protein is ATP-dependent RNA helicase RhlB.